We begin with the raw amino-acid sequence, 805 residues long: Leucine--tRNA ligase (805 aa).

A 'HIGH' region motif is present at residues 40–51 (PYPSGSGLHVGH). The 'KMSKS' region signature appears at 576 to 580 (KMSKS). Residue Lys-579 participates in ATP binding.

It belongs to the class-I aminoacyl-tRNA synthetase family.

It is found in the cytoplasm. It carries out the reaction tRNA(Leu) + L-leucine + ATP = L-leucyl-tRNA(Leu) + AMP + diphosphate. This chain is Leucine--tRNA ligase, found in Chlorobium luteolum (strain DSM 273 / BCRC 81028 / 2530) (Pelodictyon luteolum).